Consider the following 148-residue polypeptide: Small ribosomal subunit protein bS16 (148 aa).

The tract at residues 106 to 148 (QAAARAAAGAEDRPATTPKKAKKSGSAEEAEAAPATDAPAAGQ) is disordered. Low complexity predominate over residues 137–148 (AAPATDAPAAGQ).

Belongs to the bacterial ribosomal protein bS16 family.

The chain is Small ribosomal subunit protein bS16 from Frankia casuarinae (strain DSM 45818 / CECT 9043 / HFP020203 / CcI3).